The chain runs to 184 residues: Endoribonuclease YbeY (184 aa).

Zn(2+) is bound by residues His-118, His-122, and His-128. A disordered region spans residues 156–184 (YHQDRQSQKDQRLLDKSRYFDELNHGDTP). Basic and acidic residues predominate over residues 157–184 (HQDRQSQKDQRLLDKSRYFDELNHGDTP).

The protein belongs to the endoribonuclease YbeY family. The cofactor is Zn(2+).

The protein localises to the cytoplasm. In terms of biological role, single strand-specific metallo-endoribonuclease involved in late-stage 70S ribosome quality control and in maturation of the 3' terminus of the 16S rRNA. This Mycolicibacterium vanbaalenii (strain DSM 7251 / JCM 13017 / BCRC 16820 / KCTC 9966 / NRRL B-24157 / PYR-1) (Mycobacterium vanbaalenii) protein is Endoribonuclease YbeY.